The chain runs to 50 residues: Insulin-1 (50 aa).

3 disulfides stabilise this stretch: cysteine 7–cysteine 36, cysteine 19–cysteine 49, and cysteine 35–cysteine 40.

This sequence belongs to the insulin family. As to quaternary structure, heterodimer of a B chain and an A chain linked by two disulfide bonds.

The protein localises to the secreted. Insulin decreases blood glucose concentration. It increases cell permeability to monosaccharides, amino acids and fatty acids. It accelerates glycolysis, the pentose phosphate cycle, and glycogen synthesis in liver. In Katsuwonus pelamis (Skipjack tuna), this protein is Insulin-1.